The chain runs to 370 residues: MAFTLEDIVQRFGGEVVGDGSQRVGSLAPLDQAGPDQLAFLANPKYLAQVETTRAGAVLINADDLAKLASRENRNFIVTPNPYAYFARVAQTFIDLAAPKAAPGVHPSATIDPSAQIAASAVIGPHVTVEAGAVIGDNVRLDANVVIGRGTRIGAGSHLYPNVAVYHGCKLAERVIVHAGAVIGSDGFGFAPDFVGEGEARTGSWVKIPQVGGVSIAADVEIGANTTIDRGAMADTIIEECVKIDNLVQIGHNCKVGAYTVIAGCAGIAGSTTIGRHCMIGGAVGIAGHVTLADYVIVTAKSGVSKSLLKPGMYTSAFPAVNHADWNKSAALLRNIDKLRDRIKTLENAAAEKRDGPAPNAASKATGDKV.

His-252 serves as the catalytic Proton acceptor. The disordered stretch occupies residues 348 to 370; it reads NAAAEKRDGPAPNAASKATGDKV.

Belongs to the transferase hexapeptide repeat family. LpxD subfamily. Homotrimer.

The enzyme catalyses a UDP-3-O-[(3R)-3-hydroxyacyl]-alpha-D-glucosamine + a (3R)-hydroxyacyl-[ACP] = a UDP-2-N,3-O-bis[(3R)-3-hydroxyacyl]-alpha-D-glucosamine + holo-[ACP] + H(+). It participates in bacterial outer membrane biogenesis; LPS lipid A biosynthesis. Its function is as follows. Catalyzes the N-acylation of UDP-3-O-acylglucosamine using 3-hydroxyacyl-ACP as the acyl donor. Is involved in the biosynthesis of lipid A, a phosphorylated glycolipid that anchors the lipopolysaccharide to the outer membrane of the cell. The sequence is that of UDP-3-O-acylglucosamine N-acyltransferase from Paraburkholderia phytofirmans (strain DSM 17436 / LMG 22146 / PsJN) (Burkholderia phytofirmans).